The primary structure comprises 215 residues: MGETSKWWWIGANHNTSNSSPWLNSTLSELDSKTKEMLSVIDEVEDEGDSLMKRAKINYENKPKLIELLEELYRSHRSLAQKHDLLIKTSSLNSDSHNSSSCDEIRSEVCEETESSDVEAETEKDQIVEFDDGDETMKEELEILREENRVYKEKKEVVTRLLANLVRVCFCFQFNWEIFSYHLLRFCLLFSHDPIGGWVICTKRFRYYFLIMFSF.

The NAB domain occupies 5–90 (SKWWWIGANH…QKHDLLIKTS (86 aa)). Residues 134 to 165 (DETMKEELEILREENRVYKEKKEVVTRLLANL) are a coiled coil.

Belongs to the NET family. As to quaternary structure, interacts with F-actin.

Plant-specific actin binding protein. May be part of a membrane-cytoskeletal adapter complex. The polypeptide is Protein NETWORKED 3B (Arabidopsis thaliana (Mouse-ear cress)).